A 144-amino-acid polypeptide reads, in one-letter code: Large-conductance mechanosensitive channel (144 aa).

The next 2 helical transmembrane spans lie at 16-36 and 86-106; these read VIDL…VDSV and GNFL…FLMV.

Belongs to the MscL family. In terms of assembly, homopentamer.

The protein resides in the cell inner membrane. In terms of biological role, channel that opens in response to stretch forces in the membrane lipid bilayer. May participate in the regulation of osmotic pressure changes within the cell. This Cupriavidus pinatubonensis (strain JMP 134 / LMG 1197) (Cupriavidus necator (strain JMP 134)) protein is Large-conductance mechanosensitive channel.